A 65-amino-acid polypeptide reads, in one-letter code: VESP-VB1 (65 aa).

The N-terminal stretch at 1–23 (MKMSILFLFALIASLACLQLTFA) is a signal peptide. 7 AXPX repeats span residues 23–26 (AAPA), 27–30 (ASPL), 31–34 (ANPG), 35–38 (ASPE), 39–42 (AAPL), 43–46 (ADPL), and 47–50 (ADPF). The propeptide occupies 24–49 (APAASPLANPGASPEAAPLADPLADP). L62 bears the Leucine amide mark.

Expressed by the venom gland.

Its subcellular location is the secreted. Functionally, antimicrobial peptide. Shows activity against both Gram-positive (S.aureus MIC=1.0-3.75 ug/ml) and -negative (E.coli MIC=7.5-15 ug/ml) bacteria, as well against fungi (C.albicans MIC=30 ug/ml). Also promotes important mast cell degranulation. Shows little hemolytic activity on rabbit and human erythrocytes. Its mast cell degranulation activity may be related to the activation of G-protein coupled receptors in mast cells as well as interaction with other proteins located in cell endosomal membranes in the mast cells. The sequence is that of VESP-VB1 from Vespa bicolor (Black shield wasp).